Reading from the N-terminus, the 540-residue chain is Phenylalanine--tRNA ligase beta subunit (540 aa).

Positions 266 to 342 constitute a B5 domain; the sequence is LRPEKRTVSV…IAYGYDKIET (77 aa). Residues aspartate 320, aspartate 326, glutamate 329, and aspartate 330 each contribute to the Mg(2+) site.

It belongs to the phenylalanyl-tRNA synthetase beta subunit family. Type 2 subfamily. In terms of assembly, tetramer of two alpha and two beta subunits. Mg(2+) is required as a cofactor.

The protein resides in the cytoplasm. It catalyses the reaction tRNA(Phe) + L-phenylalanine + ATP = L-phenylalanyl-tRNA(Phe) + AMP + diphosphate + H(+). This Methanocorpusculum labreanum (strain ATCC 43576 / DSM 4855 / Z) protein is Phenylalanine--tRNA ligase beta subunit.